A 91-amino-acid polypeptide reads, in one-letter code: DNA-directed RNA polymerase subunit omega (91 aa).

This sequence belongs to the RNA polymerase subunit omega family. The RNAP catalytic core consists of 2 alpha, 1 beta, 1 beta' and 1 omega subunit. When a sigma factor is associated with the core the holoenzyme is formed, which can initiate transcription.

The enzyme catalyses RNA(n) + a ribonucleoside 5'-triphosphate = RNA(n+1) + diphosphate. Its function is as follows. Promotes RNA polymerase assembly. Latches the N- and C-terminal regions of the beta' subunit thereby facilitating its interaction with the beta and alpha subunits. The sequence is that of DNA-directed RNA polymerase subunit omega from Actinobacillus pleuropneumoniae serotype 5b (strain L20).